Consider the following 593-residue polypeptide: La-related protein 7 (593 aa).

A compositionally biased stretch (polar residues) spans 1–11 (MTAIETDTPSN). The disordered stretch occupies residues 1–28 (MTAIETDTPSNKVKEDESTDLRKDREKK). Positions 12–24 (KVKEDESTDLRKD) are enriched in basic and acidic residues. The 92-residue stretch at 30–121 (RSRVKQLLAD…RRRFPLGEKP (92 aa)) folds into the HTH La-type RNA-binding domain. The RRM domain maps to 127 to 205 (RTVYVELLPK…PRKAGMFPKT (79 aa)). The interval 191-363 (PPEEAPRKAG…STEEEKDAVD (173 aa)) is disordered. Basic residues predominate over residues 231–240 (KKKKKKKSKA). Acidic residues predominate over residues 248–259 (AEEDTKEQDMDI). Composition is skewed to basic and acidic residues over residues 295-307 (ERAESFDQSEKVR), 314-340 (SSSEEHDCSSAKQKKSDTKDLPQDEKP), and 348-363 (QECKELSTEEEKDAVD). The region spanning 461-574 (QFVCGVIGKI…TEKLIAKAEK (114 aa)) is the xRRM domain.

It belongs to the LARP7 family. In terms of assembly, core component of the 7SK RNP complex. Associates with box C/D small nucleolar ribonucleoprotein (snoRNP) complexes.

It localises to the nucleus. The protein localises to the nucleoplasm. RNA-binding protein that specifically binds distinct small nuclear RNA (snRNAs) and regulates their processing and function. Specifically binds the 7SK snRNA (7SK RNA) and acts as a core component of the 7SK ribonucleoprotein (RNP) complex, thereby acting as a negative regulator of transcription elongation by RNA polymerase II. The 7SK RNP complex sequesters the positive transcription elongation factor b (P-TEFb) in a large inactive 7SK RNP complex preventing RNA polymerase II phosphorylation and subsequent transcriptional elongation. The 7SK RNP complex also promotes snRNA gene transcription by RNA polymerase II via interaction with the little elongation complex (LEC). LARP7 specifically binds to the highly conserved 3'-terminal U-rich stretch of 7SK RNA; on stimulation, remains associated with 7SK RNA, whereas P-TEFb is released from the complex. LARP7 also acts as a regulator of mRNA splicing fidelity by promoting U6 snRNA processing. Specifically binds U6 snRNAs and associates with a subset of box C/D RNP complexes: promotes U6 snRNA 2'-O-methylation by facilitating U6 snRNA loading into box C/D RNP complexes. U6 snRNA 2'-O-methylation is required for mRNA splicing fidelity. The polypeptide is La-related protein 7 (Xenopus tropicalis (Western clawed frog)).